A 161-amino-acid chain; its full sequence is Small ribosomal subunit protein uS9 (161 aa).

The interval 1–38 is disordered; it reads MAQTITSLADLKQGPGAEPAGLSAEPQEPKLDKEGRAY. The span at 27–38 shows a compositional bias: basic and acidic residues; sequence QEPKLDKEGRAY.

The protein belongs to the universal ribosomal protein uS9 family.

This chain is Small ribosomal subunit protein uS9, found in Rhodospirillum centenum (strain ATCC 51521 / SW).